Reading from the N-terminus, the 882-residue chain is MTELSPKYNPAEVEAGRYQKWLDADVFKPSGDQKAKPYSIVIPPPNVTGKLHLGHAWDTTLQDIIIRQKRMQGFDTLWLPGMDHAGIATQAKVEERLREQGISRYDLGRDKFLDKVWEWKDEYATTIKEQWGKMGLSVDYSRERFTLDEGLSKAVRKVFVDLYKKGWIYRGEFIINWDPAARTALSDIEVVHKDVEGAFYHMNYMLEDGSRALQVATTRPETMFGDVAVAVNPEDPRYKDLIGKHVLLPIVNKLIPIVGDEHADPEFGTGVVKITPAHDPNDFEVGQRHNLPQVNVMNDDGTMNELAGDFAGMDRFEARQATVAKLEELGALVNIEKRVHSVGHSERSGAVVEPRLSTQWFVKMDELAKQAMDNQETDDRVDFYPPRFNDTFLQWMENVHDWVISRQLWWGHQIPAWYNAEGEIYVGEEAPEGDGWTQDEDVLDTWFSSALWPFSTMGWPDTDSEDFKRYFPTSTLVTGYDIIFFWVSRMIFQSLEFTERQPFQNVLIHGLIRDEEGRKMSKSLGNGIDPMDVIEKYGADSLRWFLSNGSAPGQDVRFSYEKMDASWNFINKIWNISRYILMNNEGLTLEEAESNVAKVAASEAGNVTDQWILHNLNETIAKVTENFDKFEFGVAGHILYNFIWEEFANWYVELTKEVLYSDNEAEKVITRSVLLYTLDKILRLLHPIMPFVTEEIYAQYAQGSIVTAAYPTVTPAFENEAAHKGVESLKDFIRAVRNARAEVNVAPSKPITILVKTADSELEDFFNSNINYIKRFTNPEKLEISSAIAAPELAMTSIITGAEIYLPLADLLNVEEELARLDKELAKWQKELDMVGKKLGNERFVANAKPEVVQKEKDKQADYQAKYDATQERIVEMHKLVK.

The 'HIGH' region signature appears at 45–55; it reads PNVTGKLHLGH. A 'KMSKS' region motif is present at residues 519–523; that stretch reads KMSKS. ATP is bound at residue Lys-522. The stretch at 808-877 forms a coiled coil; sequence LADLLNVEEE…DATQERIVEM (70 aa).

Belongs to the class-I aminoacyl-tRNA synthetase family. ValS type 1 subfamily. In terms of assembly, monomer.

It is found in the cytoplasm. The enzyme catalyses tRNA(Val) + L-valine + ATP = L-valyl-tRNA(Val) + AMP + diphosphate. In terms of biological role, catalyzes the attachment of valine to tRNA(Val). As ValRS can inadvertently accommodate and process structurally similar amino acids such as threonine, to avoid such errors, it has a 'posttransfer' editing activity that hydrolyzes mischarged Thr-tRNA(Val) in a tRNA-dependent manner. In Streptococcus pyogenes serotype M6 (strain ATCC BAA-946 / MGAS10394), this protein is Valine--tRNA ligase.